Reading from the N-terminus, the 380-residue chain is ATP phosphoribosyltransferase regulatory subunit (380 aa).

This sequence belongs to the class-II aminoacyl-tRNA synthetase family. HisZ subfamily. In terms of assembly, heteromultimer composed of HisG and HisZ subunits.

The protein localises to the cytoplasm. It functions in the pathway amino-acid biosynthesis; L-histidine biosynthesis; L-histidine from 5-phospho-alpha-D-ribose 1-diphosphate: step 1/9. Functionally, required for the first step of histidine biosynthesis. May allow the feedback regulation of ATP phosphoribosyltransferase activity by histidine. The chain is ATP phosphoribosyltransferase regulatory subunit from Thermoanaerobacter pseudethanolicus (strain ATCC 33223 / 39E) (Clostridium thermohydrosulfuricum).